The following is a 506-amino-acid chain: Lysine--tRNA ligase (506 aa).

Positions 416 and 423 each coordinate Mg(2+).

The protein belongs to the class-II aminoacyl-tRNA synthetase family. In terms of assembly, homodimer. The cofactor is Mg(2+).

It is found in the cytoplasm. It carries out the reaction tRNA(Lys) + L-lysine + ATP = L-lysyl-tRNA(Lys) + AMP + diphosphate. The chain is Lysine--tRNA ligase from Baumannia cicadellinicola subsp. Homalodisca coagulata.